A 339-amino-acid polypeptide reads, in one-letter code: MLELFFEYIFPLIIIALKVVAITIPLILCVAYLTYAERRVIGLMQLRRGPNVVGPFGLLQPIADAVKLLFKEPIIPTNSDKILFILAPMITFILSLIGWAVIPFAKGVVLADINVGVLYILAISSLSVYGIIIAGWASNSKYAFLGAIRSSAQMISYEVSMGLVIITVLLTTGTLNLSEIIEVQRTMPWWIDLMLLPMGVVFFISVLAETNRLPFDLPEAESELVAGYNVEYSSMGFALFFLGEYANMILVSAMTTTFFLGGYLPPFNISWLDCIPGFFWFVFKVGFLLFCFLWIRATLPRYRYDQLMRLGWKVFLPLTLFWVVLVSSVLVYTDNLPSI.

9 helical membrane-spanning segments follow: residues 9 to 29, 50 to 70, 82 to 102, 115 to 135, 161 to 181, 187 to 207, 235 to 255, 275 to 295, and 311 to 331; these read IFPL…LILC, PNVV…KLLF, ILFI…WAVI, VGVL…IIAG, MGLV…SEII, MPWW…ISVL, MGFA…SAMT, IPGF…FLWI, and GWKV…SVLV.

The protein belongs to the complex I subunit 1 family. As to quaternary structure, NDH-1 is composed of 14 different subunits. Subunits NuoA, H, J, K, L, M, N constitute the membrane sector of the complex.

It localises to the cell membrane. It catalyses the reaction a quinone + NADH + 5 H(+)(in) = a quinol + NAD(+) + 4 H(+)(out). In terms of biological role, NDH-1 shuttles electrons from NADH, via FMN and iron-sulfur (Fe-S) centers, to quinones in the respiratory chain. The immediate electron acceptor for the enzyme in this species is believed to be ubiquinone. Couples the redox reaction to proton translocation (for every two electrons transferred, four hydrogen ions are translocated across the cytoplasmic membrane), and thus conserves the redox energy in a proton gradient. This subunit may bind ubiquinone. The chain is NADH-quinone oxidoreductase subunit H from Rickettsia africae (strain ESF-5).